The following is a 463-amino-acid chain: MADYIVKDISLADFGRKEIAIAETEMPGLMATRAEYGPQQILKGARIAGSLHMTIQTAVLIETLTALGAEVRWASCNIFSTQDHAAAAIAAAGVPVFAFKGENLVEYWEYAHKIFEWHDGGYPNLILDDGGDATLLCVLGPKAEKDPSILNNPQNEEEEALYAVMKKYLAEKPGFYSAIRAAIGGVSEETTTGVHRLYQMAQKDELPFPAINVNDSVTKSKFDNLYGCRESLVDAIRRGTDVMLSGKVAVVCGYGDVGKGSAASLRQGGARVIVTEVDPICALQAAMEGYEVQTLNDVADKADIFVTATGNKDVITVDDMRKMKNNAIVCNIGHFDSEIQIAGLRNFKWDEIKPQVHHVEFPDGKKLIVLSEGRLVNLGNATGHPSFVMSASFTNQTLAQIELWTNKAKYENQVYTLPKHLDEKVAFLHLEKLGAKLTTLRKDQADYIGVPEAGPFKPDHYRY.

Positions 54, 129, and 189 each coordinate substrate. T190–T192 serves as a coordination point for NAD(+). Substrate is bound by residues K219 and D223. Residues N224, G253–G258, E276, N311, I332–H334, and N377 each bind NAD(+).

This sequence belongs to the adenosylhomocysteinase family. It depends on NAD(+) as a cofactor.

The protein resides in the cytoplasm. The enzyme catalyses S-adenosyl-L-homocysteine + H2O = L-homocysteine + adenosine. It functions in the pathway amino-acid biosynthesis; L-homocysteine biosynthesis; L-homocysteine from S-adenosyl-L-homocysteine: step 1/1. In terms of biological role, may play a key role in the regulation of the intracellular concentration of adenosylhomocysteine. This Caulobacter vibrioides (strain ATCC 19089 / CIP 103742 / CB 15) (Caulobacter crescentus) protein is Adenosylhomocysteinase.